A 179-amino-acid chain; its full sequence is Large ribosomal subunit protein uL6 (179 aa).

It belongs to the universal ribosomal protein uL6 family. In terms of assembly, part of the 50S ribosomal subunit.

In terms of biological role, this protein binds to the 23S rRNA, and is important in its secondary structure. It is located near the subunit interface in the base of the L7/L12 stalk, and near the tRNA binding site of the peptidyltransferase center. This is Large ribosomal subunit protein uL6 from Trichodesmium erythraeum (strain IMS101).